Reading from the N-terminus, the 1887-residue chain is Protein TIC 214 (1887 aa).

Helical transmembrane passes span 18-38 (IINS…FSIG), 64-84 (FITG…HLAL), 87-107 (PHTI…WNNH), 124-144 (LSIQ…HFIL), 172-192 (VGWL…LVWI), and 221-241 (IFSI…PSPI). Disordered regions lie at residues 248–300 (EASK…EGWD), 786–805 (EEQT…DNKR), and 1569–1603 (LPSN…NLSP). Over residues 256–268 (VESEEERDVEIET) the composition is skewed to acidic residues. Positions 775–816 (KEREFKILESREEQTKREEKKEKDKKEDNKRKEQARIAIEEA) form a coiled coil. A compositionally biased stretch (basic and acidic residues) spans 1578-1597 (RSQETKEPPSQRERGSDIEN).

This sequence belongs to the TIC214 family. In terms of assembly, part of the Tic complex.

The protein resides in the plastid. The protein localises to the chloroplast inner membrane. Involved in protein precursor import into chloroplasts. May be part of an intermediate translocation complex acting as a protein-conducting channel at the inner envelope. The chain is Protein TIC 214 from Solanum bulbocastanum (Wild potato).